The chain runs to 87 residues: Acyl-CoA-binding protein (87 aa).

The region spanning 3-87 (LKEEFEEHAV…KVKQLLEESA (85 aa)) is the ACB domain. An acyl-CoA-binding positions include 30–34 (YGLYK), Lys-56, and Tyr-75.

The protein belongs to the ACBP family.

Its function is as follows. Binds medium- and long-chain acyl-CoA esters with very high affinity and may function as an intracellular carrier of acyl-CoA esters. This chain is Acyl-CoA-binding protein (ACABP), found in Fritillaria agrestis (Stinkbells).